A 520-amino-acid chain; its full sequence is Pleckstrin homology domain-containing family O member 1-A (520 aa).

Disordered regions lie at residues 1–23, 208–296, 313–439, and 497–520; these read MKKSHLVKRGLQDANQPSSQPDK, SLDK…GHLQ, IQEQ…KSTD, and QARQRREELSKTGMASQKLQQKSP. One can recognise a PH domain in the interval 20–131; that stretch reads QPDKVGWIRR…WINVLNTAIT (112 aa). Polar residues predominate over residues 227 to 241; the sequence is PASNTEAQEKTSSLP. 2 stretches are compositionally biased toward basic and acidic residues: residues 242–255 and 333–347; these read RKSEISWSQEDHPR and DSPRLRHLKGSDSPH. Over residues 348–361 the composition is skewed to low complexity; sequence SKGSSSPHSANSPS. 2 stretches are compositionally biased toward basic and acidic residues: residues 363–385 and 396–418; these read RAKDSPSSKSKESPHAKSKDSPR and KSIDSPDSKESSSLHMKCIDLTH. Positions 420–439 are enriched in polar residues; it reads KGSQSPLSTGSNSPHMKSTD. The segment covering 497 to 506 has biased composition (basic and acidic residues); sequence QARQRREELS. Residues 509–520 are compositionally biased toward polar residues; the sequence is GMASQKLQQKSP.

In terms of processing, C-terminal fragments could be released during apoptosis via caspase-3-dependent cleavage.

It localises to the membrane. Its subcellular location is the nucleus. The protein localises to the cytoplasm. Functionally, plays a role in the regulation of the actin cytoskeleton through its interactions with actin capping protein (CP). The polypeptide is Pleckstrin homology domain-containing family O member 1-A (plekho1a) (Danio rerio (Zebrafish)).